We begin with the raw amino-acid sequence, 734 residues long: 5-methyltetrahydropteroyltriglutamate--homocysteine methyltransferase (734 aa).

5-methyltetrahydropteroyltri-L-glutamate is bound by residues 15–18 and lysine 104; that span reads REFK. Residues 409–411 and glutamate 462 each bind L-homocysteine; that span reads IGS. L-methionine contacts are provided by residues 409 to 411 and glutamate 462; that span reads IGS. Residues 493 to 494 and tryptophan 539 each bind 5-methyltetrahydropteroyltri-L-glutamate; that span reads RC. Aspartate 577 contacts L-homocysteine. L-methionine is bound at residue aspartate 577. Glutamate 583 is a 5-methyltetrahydropteroyltri-L-glutamate binding site. Zn(2+)-binding residues include histidine 618, cysteine 620, and glutamate 642. Histidine 672 (proton donor) is an active-site residue. Cysteine 704 lines the Zn(2+) pocket.

It belongs to the vitamin-B12 independent methionine synthase family. The cofactor is Zn(2+).

The catalysed reaction is 5-methyltetrahydropteroyltri-L-glutamate + L-homocysteine = tetrahydropteroyltri-L-glutamate + L-methionine. It functions in the pathway amino-acid biosynthesis; L-methionine biosynthesis via de novo pathway; L-methionine from L-homocysteine (MetE route): step 1/1. In terms of biological role, catalyzes the transfer of a methyl group from 5-methyltetrahydrofolate to homocysteine resulting in methionine formation. This is 5-methyltetrahydropteroyltriglutamate--homocysteine methyltransferase from Thermotoga maritima (strain ATCC 43589 / DSM 3109 / JCM 10099 / NBRC 100826 / MSB8).